The sequence spans 71 residues: Conotoxin TxMMSK-05 (71 aa).

An N-terminal signal peptide occupies residues 1–20 (MMSKLGALLIICLLLFPLTA). Positions 21–52 (VPLDGDQHADRPAERLQDDISSKHHPMFDAVR) are excised as a propeptide. Intrachain disulfides connect cysteine 54-cysteine 70, cysteine 55-cysteine 66, and cysteine 60-cysteine 69.

The protein belongs to the conotoxin M superfamily. Expressed by the venom duct.

The protein resides in the secreted. The polypeptide is Conotoxin TxMMSK-05 (Conus textile (Cloth-of-gold cone)).